The sequence spans 298 residues: Ribose-phosphate pyrophosphokinase (298 aa).

Residues 33 to 35 and 91 to 92 each bind ATP; these read DGE and RQ. Positions 125 and 164 each coordinate Mg(2+). Lysine 187 is an active-site residue. 2 residues coordinate D-ribose 5-phosphate: arginine 189 and aspartate 224.

The protein belongs to the ribose-phosphate pyrophosphokinase family. Class III (archaeal) subfamily. Mg(2+) is required as a cofactor.

The protein resides in the cytoplasm. The catalysed reaction is D-ribose 5-phosphate + ATP = 5-phospho-alpha-D-ribose 1-diphosphate + AMP + H(+). It participates in metabolic intermediate biosynthesis; 5-phospho-alpha-D-ribose 1-diphosphate biosynthesis; 5-phospho-alpha-D-ribose 1-diphosphate from D-ribose 5-phosphate (route I): step 1/1. Functionally, involved in the biosynthesis of the central metabolite phospho-alpha-D-ribosyl-1-pyrophosphate (PRPP) via the transfer of pyrophosphoryl group from ATP to 1-hydroxyl of ribose-5-phosphate (Rib-5-P). In Methanobrevibacter smithii (strain ATCC 35061 / DSM 861 / OCM 144 / PS), this protein is Ribose-phosphate pyrophosphokinase.